The following is an 85-amino-acid chain: Large ribosomal subunit protein bL27 (85 aa).

The segment at 1 to 20 (MAHKKAGGSTRNGRDSEAKR) is disordered.

Belongs to the bacterial ribosomal protein bL27 family.

This chain is Large ribosomal subunit protein bL27, found in Cronobacter sakazakii (strain ATCC BAA-894) (Enterobacter sakazakii).